Reading from the N-terminus, the 352-residue chain is MNLLQEALAKIQPVDAVMLAKAQAKLDKKTKPLGSLGRLEEFARRFVAITGDLQPDTAKKIVFTFAGDHGVVEEGVSAFPKEVTPQMVFNFLRGGAGVNVLARHTGAEVRVVDVGVDFDFEPTPGLIIDKVAKGTRNFAKGPAMSREEAIAAIEVGIGLANRAKAEGVAMLGTGEMGIGNTTPSSAIIAAISGKTVKEVTHRGTGINDAALSHKIRVIEQGLAVNKPDPRDPLDVLAKVGGLEIAAIAGLVLGAAANRQPVVIDGFISTAGALIASELNPHVKEYIFAAHESVEIGHRFMLDRIGAEPILDLKLRLGEGTGAALAMGLIEAGVKILKEMATFEEAGVAEGEY.

Catalysis depends on Glu318, which acts as the Proton acceptor.

It belongs to the CobT family.

It catalyses the reaction 5,6-dimethylbenzimidazole + nicotinate beta-D-ribonucleotide = alpha-ribazole 5'-phosphate + nicotinate + H(+). It participates in nucleoside biosynthesis; alpha-ribazole biosynthesis; alpha-ribazole from 5,6-dimethylbenzimidazole: step 1/2. Functionally, catalyzes the synthesis of alpha-ribazole-5'-phosphate from nicotinate mononucleotide (NAMN) and 5,6-dimethylbenzimidazole (DMB). This Geotalea uraniireducens (strain Rf4) (Geobacter uraniireducens) protein is Nicotinate-nucleotide--dimethylbenzimidazole phosphoribosyltransferase.